Here is a 414-residue protein sequence, read N- to C-terminus: Methyl-CpG-binding domain protein 2 (414 aa).

The segment at methionine 1–arginine 152 is required for interaction with DHX9 and PRMT5. The segment at methionine 1 to lysine 163 is disordered. The span at glycine 77–glycine 95 shows a compositional bias: basic residues. A compositionally biased stretch (gly residues) spans glutamine 98–valine 123. The 69-residue stretch at glutamate 148–methionine 216 folds into the MBD domain. Serine 184 bears the Phosphoserine mark. The disordered stretch occupies residues methionine 217 to threonine 244. Residues proline 232–threonine 244 are compositionally biased toward polar residues. Serine 410 carries the phosphoserine modification.

As to quaternary structure, heterodimer with MBD3 (via N-terminus). Component of the MeCP1 complex that contains HDAC1 and HDAC2. Component of the nucleosome remodeling and deacetylase (NuRD) repressor complex, composed of core proteins MTA1, MTA2, MTA3, RBBP4, RBBP7, HDAC1, HDAC2, MBD2, MBD3, and peripherally associated proteins CDK2AP1, CDK2AP2, GATAD2A, GATAD2B, CHD3, CHD4 and CHD5. The exact stoichiometry of the NuRD complex is unknown, and some subunits such as MBD2 and MBD3, GATAD2A and GATAD2B, and CHD3, CHD4 and CHD5 define mutually exclusive NuRD complexes. Interacts with CDK2AP1. Interacts with DHX9. Interacts with DNMT1. Interacts with GATAD2A/p66-alpha. Interacts with GATAD2B/p66-beta. Interacts with GPN1. Interacts with MIZF. Interacts with PRMT5. Interacts with SIN3A. Interacts with SPHK2. Highly expressed in brain, heart, kidney, lung, skeletal muscle, spleen and testis. Detected at lower levels in embryonic stem cells.

It localises to the nucleus. Its subcellular location is the chromosome. In terms of biological role, binds CpG islands in promoters where the DNA is methylated at position 5 of cytosine within CpG dinucleotides. Binds hemimethylated DNA as well. Recruits histone deacetylases and DNA methyltransferases to chromatin. Acts as a component of the histone deacetylase NuRD complex which participates in the remodeling of chromatin. Acts as transcriptional repressor and plays a role in gene silencing. Functions as a scaffold protein, targeting GATAD2A and GATAD2B to chromatin to promote repression. May enhance the activation of some unmethylated cAMP-responsive promoters. Selectively represses transcription activity of methylated rRNA promoters. The protein is Methyl-CpG-binding domain protein 2 of Mus musculus (Mouse).